Here is a 462-residue protein sequence, read N- to C-terminus: NEDD8-activating enzyme E1 regulatory subunit (462 aa).

Belongs to the ubiquitin-activating E1 family. ULA1 subfamily. Heterodimer of UBA3 and ULA1. The complex binds NEDD8 and UBC12.

It participates in protein modification; protein neddylation. Functionally, regulatory subunit of the dimeric UBA3-ULA1 E1 enzyme. E1 activates NEDD8/RUB1 by first adenylating its C-terminal glycine residue with ATP, thereafter linking this residue to the side chain of the catalytic cysteine, yielding a NEDD8-UBA3 thioester and free AMP. E1 finally transfers NEDD8 to the catalytic cysteine of UBC12. The chain is NEDD8-activating enzyme E1 regulatory subunit (ULA1) from Saccharomyces cerevisiae (strain ATCC 204508 / S288c) (Baker's yeast).